The chain runs to 238 residues: Ribosomal RNA small subunit methyltransferase G (238 aa).

S-adenosyl-L-methionine contacts are provided by residues Gly-78, 129–130, and Arg-148; that span reads AE.

It belongs to the methyltransferase superfamily. RNA methyltransferase RsmG family.

It is found in the cytoplasm. Its function is as follows. Specifically methylates the N7 position of a guanine in 16S rRNA. The protein is Ribosomal RNA small subunit methyltransferase G of Caldicellulosiruptor bescii (strain ATCC BAA-1888 / DSM 6725 / KCTC 15123 / Z-1320) (Anaerocellum thermophilum).